The chain runs to 826 residues: Glycerol-3-phosphate acyltransferase 1, mitochondrial (826 aa).

Over 1–87 the chain is Cytoplasmic; it reads MDESALTLGT…FFNPSIPSLG (87 aa). The tract at residues 80 to 120 is important for mitochondrial localization; that stretch reads NPSIPSLGLRNVIYINETHTRHRGWLARRLSYVLFIQERDV. An intramembrane segment occupies 88 to 118; that stretch reads LRNVIYINETHTRHRGWLARRLSYVLFIQER. Residues 119–826 are Cytoplasmic-facing; the sequence is DVHKGMFATN…LEYILSFVVL (708 aa). An HXXXXD motif motif is present at residues 230-235; it reads HRSHID. Positions 278, 279, 288, 293, and 328 each coordinate CoA. Residue Ser380 is modified to Phosphoserine. CoA is bound at residue Arg462. 2 positions are modified to phosphoserine: Ser686 and Ser693. An N6-acetyllysine mark is found at Lys778 and Lys782.

This sequence belongs to the GPAT/DAPAT family.

Its subcellular location is the mitochondrion outer membrane. The catalysed reaction is sn-glycerol 3-phosphate + an acyl-CoA = a 1-acyl-sn-glycero-3-phosphate + CoA. The enzyme catalyses (9Z,12Z)-octadecadienoyl-CoA + sn-glycerol 3-phosphate = 1-(9Z,12Z)-octadecadienoyl-sn-glycero-3-phosphate + CoA. It carries out the reaction sn-glycerol 3-phosphate + (9Z)-octadecenoyl-CoA = 1-(9Z-octadecenoyl)-sn-glycero-3-phosphate + CoA. It catalyses the reaction sn-glycerol 3-phosphate + octadecanoyl-CoA = 1-octadecanoyl-sn-glycero-3-phosphate + CoA. The catalysed reaction is sn-glycerol 3-phosphate + hexadecanoyl-CoA = 1-hexadecanoyl-sn-glycero-3-phosphate + CoA. The enzyme catalyses dodecanoyl-CoA + sn-glycerol 3-phosphate = 1-dodecanoyl-sn-glycerol 3-phosphate + CoA. It carries out the reaction 1-acyl-sn-glycero-3-phospho-(1'-sn-glycerol) + an acyl-CoA = a 1,2-diacyl-sn-glycero-3-phospho-(1'-sn-glycerol) + CoA. It participates in phospholipid metabolism; CDP-diacylglycerol biosynthesis; CDP-diacylglycerol from sn-glycerol 3-phosphate: step 1/3. Mitochondrial membrane protein that catalyzes the essential first step of biosynthesis of glycerolipids such as triglycerides, phosphatidic acids and lysophosphatidic acids. Esterifies acyl-group from acyl-coenzyme A (acyl-CoA) to the sn-1 position of glycerol-3-phosphate, to produce lysophosphatidic acid. Has a narrow hydrophobic binding cleft that selects for a linear acyl chain. Catalytic activity is higher for substrates with a 16-carbon acyl chain. This Sus scrofa (Pig) protein is Glycerol-3-phosphate acyltransferase 1, mitochondrial.